The chain runs to 206 residues: Large ribosomal subunit protein uL13z (206 aa).

The protein belongs to the universal ribosomal protein uL13 family.

The protein is Large ribosomal subunit protein uL13z (RPL13AA) of Arabidopsis thaliana (Mouse-ear cress).